We begin with the raw amino-acid sequence, 88 residues long: Small ribosomal subunit protein uS15 (88 aa).

It belongs to the universal ribosomal protein uS15 family. As to quaternary structure, part of the 30S ribosomal subunit. Forms a bridge to the 50S subunit in the 70S ribosome, contacting the 23S rRNA.

Functionally, one of the primary rRNA binding proteins, it binds directly to 16S rRNA where it helps nucleate assembly of the platform of the 30S subunit by binding and bridging several RNA helices of the 16S rRNA. Forms an intersubunit bridge (bridge B4) with the 23S rRNA of the 50S subunit in the ribosome. This Pelobacter propionicus (strain DSM 2379 / NBRC 103807 / OttBd1) protein is Small ribosomal subunit protein uS15.